The sequence spans 385 residues: Probable alpha-galactosidase (385 aa).

The first 19 residues, 1–19, serve as a signal peptide directing secretion; it reads MMKIAATLLATIALATVNA. 2 cysteine pairs are disulfide-bonded: cysteine 40/cysteine 72 and cysteine 119/cysteine 149. Aspartate 147 (nucleophile) is an active-site residue. 180–184 contacts substrate; it reads DWGYE. Catalysis depends on aspartate 202, which acts as the Proton donor.

The protein belongs to the glycosyl hydrolase 27 family.

The catalysed reaction is Hydrolysis of terminal, non-reducing alpha-D-galactose residues in alpha-D-galactosides, including galactose oligosaccharides, galactomannans and galactolipids.. This is Probable alpha-galactosidase (melA) from Dictyostelium discoideum (Social amoeba).